Consider the following 776-residue polypeptide: Ankyrin repeat and EF-hand domain-containing protein 1 (776 aa).

4 ANK repeats span residues 47 to 76 (NGLS…HPDV), 184 to 213 (TGRT…EVNA), 217 to 246 (DRHH…DVGL), and 250 to 279 (NGNT…DLKW). The region spanning 335-369 (EREAFLREAFAVLDRGDGSISKNDFVMVLEERQDY) is the EF-hand domain. ANK repeat units lie at residues 524–553 (YYKT…NVNA), 557–586 (FLWT…LIDA), 590–619 (NNST…KFQL), and 623–652 (KGHS…NLPK).

The protein is Ankyrin repeat and EF-hand domain-containing protein 1 (ANKEF1) of Homo sapiens (Human).